A 163-amino-acid chain; its full sequence is ATP synthase subunit b (163 aa).

Residues 9–29 traverse the membrane as a helical segment; that stretch reads GLLIAQLINVVFVVWLLTTFL.

This sequence belongs to the ATPase B chain family. As to quaternary structure, F-type ATPases have 2 components, F(1) - the catalytic core - and F(0) - the membrane proton channel. F(1) has five subunits: alpha(3), beta(3), gamma(1), delta(1), epsilon(1). F(0) has four main subunits: a(1), b(2) and c(10-14). The alpha and beta chains form an alternating ring which encloses part of the gamma chain. F(1) is attached to F(0) by a central stalk formed by the gamma and epsilon chains, while a peripheral stalk is formed by the delta and b chains.

Its subcellular location is the cell membrane. Its function is as follows. F(1)F(0) ATP synthase produces ATP from ADP in the presence of a proton or sodium gradient. F-type ATPases consist of two structural domains, F(1) containing the extramembraneous catalytic core and F(0) containing the membrane proton channel, linked together by a central stalk and a peripheral stalk. During catalysis, ATP synthesis in the catalytic domain of F(1) is coupled via a rotary mechanism of the central stalk subunits to proton translocation. In terms of biological role, component of the F(0) channel, it forms part of the peripheral stalk, linking F(1) to F(0). This Roseiflexus castenholzii (strain DSM 13941 / HLO8) protein is ATP synthase subunit b.